A 558-amino-acid polypeptide reads, in one-letter code: WW domain-containing adapter protein with coiled-coil (558 aa).

Disordered stretches follow at residues 1 to 129 (MVMY…WSEH), 159 to 244 (QRQK…SPAP), and 321 to 461 (VAQQ…APGR). The segment covering 22–32 (QPYQTLKYSSK) has biased composition (polar residues). 2 stretches are compositionally biased toward basic and acidic residues: residues 33–46 (SHPDHRHEKMRDSN) and 56–70 (RRSDSPDNKHMDNTG). Residues 72–82 (GRAKAIHPHRG) show a composition bias toward basic residues. The segment covering 99–116 (NHSSLHSSNSHSNPNKSS) has biased composition (low complexity). The WW domain occupies 120 to 153 (FEPADDWSEHISSSGKKYYYNCRTEVSQWEKPKE). The segment covering 175 to 184 (PKDRDYRREA) has biased composition (basic and acidic residues). The segment covering 188-200 (TPASYSSTKSSIA) has biased composition (polar residues). Residues 204 to 217 (PSSLTPSSSSAAVS) show a composition bias toward low complexity. 2 stretches are compositionally biased toward polar residues: residues 223–234 (NSASSASGSTVP) and 321–378 (VAQQ…MTVK). Low complexity predominate over residues 402 to 431 (SPRTLQRQSSQRSPSPGPNHMGSNSSSSSN). A compositionally biased stretch (gly residues) spans 432-443 (NGGGGGGQGPGV). Positions 529–555 (QATLREQRILFLRQQIKELEKLKNQNS) form a coiled coil.

The protein localises to the nucleus. Its function is as follows. Acts as a linker between gene transcription and histone H2B monoubiquitination at 'Lys-120' (H2BK120ub1). Positive regulator of amino acid starvation-induced autophagy. Positively regulates MTOR activity. May negatively regulate the ubiquitin proteasome pathway. In Danio rerio (Zebrafish), this protein is WW domain-containing adapter protein with coiled-coil (waca).